We begin with the raw amino-acid sequence, 417 residues long: RH-like protein ID (417 aa).

11 helical membrane passes run 12–32 (CLPL…YFFT), 44–64 (LVAS…GFGF), 77–97 (VAFN…LDGF), 125–145 (ISAG…MVLV), 172–192 (IYVF…KPLA), 203–223 (TIPS…WPSF), 238–258 (VFNT…VSSL), 265–285 (INMT…ATSC), 287–307 (LIPS…ISIG), 331–351 (NFSL…VLDT), and 358–378 (MVGF…VIAL).

This sequence belongs to the ammonium transporter (TC 2.A.49) family. Rh subfamily.

It is found in the membrane. May be part of an oligomeric complex which is likely to have a transport or channel function in the erythrocyte membrane. This is RH-like protein ID from Gorilla gorilla gorilla (Western lowland gorilla).